Consider the following 418-residue polypeptide: Cell division protein FtsZ (418 aa).

GTP-binding positions include 27–31, 114–116, glutamate 145, lysine 149, and aspartate 193; these read GGGSN and GTG. Residues 386–418 are disordered; the sequence is KNGVKGHTFGVPLPSVNEDLDEPTFLRNRNKGL.

The protein belongs to the FtsZ family. As to quaternary structure, homodimer. Polymerizes to form a dynamic ring structure in a strictly GTP-dependent manner. Interacts directly with several other division proteins.

The protein resides in the cytoplasm. Essential cell division protein that forms a contractile ring structure (Z ring) at the future cell division site. The regulation of the ring assembly controls the timing and the location of cell division. One of the functions of the FtsZ ring is to recruit other cell division proteins to the septum to produce a new cell wall between the dividing cells. Binds GTP and shows GTPase activity. The sequence is that of Cell division protein FtsZ from Treponema pallidum (strain Nichols).